A 176-amino-acid polypeptide reads, in one-letter code: Magnetosome protein MamT (176 aa).

The Cytoplasmic segment spans residues 1–11; it reads MSMEAPRRGRR. A helical transmembrane segment spans residues 12–30; sequence WVSLGMIALLAAIGLGLYW. Residues 31 to 176 are Lumenal-facing; that stretch reads DQLSTPSGIT…DKKGGMRWQL (146 aa). The short motif at 89–109 is the MCR (magnetochrome) 1 element; it reads VKPGTGMPHPYVGDCIQCHLM. Heme-binding residues include cysteine 103, cysteine 106, histidine 107, cysteine 154, cysteine 157, and histidine 158. Positions 140 to 160 match the MCR 2 motif; the sequence is ILPTSRQPHPPAGRCIKCHDI.

The protein belongs to the magnetosome MamT family. Requires heme as cofactor.

The protein resides in the magnetosome membrane. Functionally, may play a role in magnetite crystal maturation. May transfer electrons to balance the Fe(2+)-Fe(3+) ratio during magnetite formation. This Paramagnetospirillum magneticum (strain ATCC 700264 / AMB-1) (Magnetospirillum magneticum) protein is Magnetosome protein MamT (mamT).